We begin with the raw amino-acid sequence, 558 residues long: Potassium-transporting ATPase potassium-binding subunit (558 aa).

The next 11 membrane-spanning stretches (helical) occupy residues 1–21, 58–78, 85–105, 130–150, 179–199, 245–265, 279–299, 374–394, 416–436, 484–504, and 527–547; these read MDTL…VLVH, WPAY…VVYG, FLPY…NTAV, GLAV…IALV, LSLV…FAGF, PTAW…FSLP, TAIA…LTLF, GLYG…LLVG, ILVT…IPAV, ALGV…LALA, and FVGL…FPVL.

It belongs to the KdpA family. In terms of assembly, the system is composed of three essential subunits: KdpA, KdpB and KdpC.

It localises to the cell membrane. Part of the high-affinity ATP-driven potassium transport (or Kdp) system, which catalyzes the hydrolysis of ATP coupled with the electrogenic transport of potassium into the cytoplasm. This subunit binds the extracellular potassium ions and delivers the ions to the membrane domain of KdpB through an intramembrane tunnel. The chain is Potassium-transporting ATPase potassium-binding subunit from Clavibacter sepedonicus (Clavibacter michiganensis subsp. sepedonicus).